The chain runs to 299 residues: Dye-decolorizing peroxidase YfeX (299 aa).

H215 contributes to the heme binding site.

Belongs to the DyP-type peroxidase family. The cofactor is heme b.

It is found in the cytoplasm. Its function is as follows. Has both general peroxidase activity and dye-decolorizing activity. Can catalyze the oxidation of 2,2'-azino-bis(3-ethylbenzothiazoline-6-sulphonic acid) (ABTS), and the phenolic compounds guaiacol and catechol. Also decolorizes the anthraquinone dye reactive blue 19 (RB19). The chain is Dye-decolorizing peroxidase YfeX from Escherichia coli O157:H7.